We begin with the raw amino-acid sequence, 86 residues long: MDPYKVIIRPVVTEKAISLIEKENKLTFIVDRRATKQDIKRAVEEIFNVKVEKVNTLITPRGEKKAYVKLKPEYSASEVAARLGLF.

This sequence belongs to the universal ribosomal protein uL23 family. In terms of assembly, part of the 50S ribosomal subunit. Contacts protein L29.

Its function is as follows. Binds to 23S rRNA. One of the proteins that surrounds the polypeptide exit tunnel on the outside of the ribosome. The chain is Large ribosomal subunit protein uL23 from Pyrococcus furiosus (strain ATCC 43587 / DSM 3638 / JCM 8422 / Vc1).